The following is a 351-amino-acid chain: uncharacterized protein (351 aa).

The segment at 1–61 is disordered; that stretch reads MNDKRKPSFQ…RDKQEVKETR (61 aa). 2 stretches are compositionally biased toward basic and acidic residues: residues 16–38 and 44–61; these read FQER…HFND and RNEK…KETR.

Belongs to the class IV-like SAM-binding methyltransferase superfamily. RNA methyltransferase TrmH family.

This is an uncharacterized protein from Haemophilus influenzae (strain ATCC 51907 / DSM 11121 / KW20 / Rd).